Consider the following 464-residue polypeptide: ATP-dependent protease ATPase subunit HslU (464 aa).

Residues I19, 61–66, D277, E342, and R414 contribute to the ATP site; that span reads GVGKTE.

It belongs to the ClpX chaperone family. HslU subfamily. A double ring-shaped homohexamer of HslV is capped on each side by a ring-shaped HslU homohexamer. The assembly of the HslU/HslV complex is dependent on binding of ATP.

The protein localises to the cytoplasm. Functionally, ATPase subunit of a proteasome-like degradation complex; this subunit has chaperone activity. The binding of ATP and its subsequent hydrolysis by HslU are essential for unfolding of protein substrates subsequently hydrolyzed by HslV. HslU recognizes the N-terminal part of its protein substrates and unfolds these before they are guided to HslV for hydrolysis. This Lactobacillus johnsonii (strain CNCM I-12250 / La1 / NCC 533) protein is ATP-dependent protease ATPase subunit HslU.